A 320-amino-acid chain; its full sequence is uncharacterized protein (320 aa).

This sequence to S.pombe SpAC23H3.12c.

This is an uncharacterized protein from Saccharomyces cerevisiae (strain ATCC 204508 / S288c) (Baker's yeast).